The chain runs to 380 residues: uncharacterized protein (380 aa).

In terms of domain architecture, Peptidase M14 spans 111–369; the sequence is APYSMERHHD…DCLAILAEMI (259 aa). Residues H164, E167, and H257 each contribute to the Zn(2+) site. E333 functions as the Proton donor/acceptor in the catalytic mechanism.

The cofactor is Zn(2+).

This is an uncharacterized protein from Zymomonas mobilis subsp. mobilis (strain ATCC 31821 / ZM4 / CP4).